The chain runs to 282 residues: V-set domain-containing T-cell activation inhibitor 1 (282 aa).

The first 24 residues, 1 to 24, serve as a signal peptide directing secretion; the sequence is MASLGQILFWSIISIIIILAGAIA. Over 25 to 259 the chain is Extracellular; the sequence is LIIGFGISGR…HLQLLNSKAS (235 aa). Ig-like V-type domains follow at residues 35 to 146 and 153 to 241; these read HSIT…LEYK and PEVN…IKVT. 2 disulfide bridges follow: C56/C130 and C168/C225. N216 is a glycosylation site (N-linked (GlcNAc...) asparagine). The helical transmembrane segment at 260–280 threads the bilayer; the sequence is LCVSSFFAISWALLPLSPYLM. The Cytoplasmic segment spans residues 281–282; the sequence is LK.

This sequence belongs to the immunoglobulin superfamily. BTN/MOG family. In terms of processing, N-glycosylated. Overexpressed in breast, ovarian, endometrial, renal cell (RCC) and non-small-cell lung cancers (NSCLC). Expressed on activated T- and B-cells, monocytes and dendritic cells, but not expressed in most normal tissues (at protein level). Widely expressed, including in kidney, liver, lung, ovary, placenta, spleen and testis.

The protein localises to the cell membrane. In terms of biological role, negatively regulates T-cell-mediated immune response by inhibiting T-cell activation, proliferation, cytokine production and development of cytotoxicity. When expressed on the cell surface of tumor macrophages, plays an important role, together with regulatory T-cells (Treg), in the suppression of tumor-associated antigen-specific T-cell immunity. Involved in promoting epithelial cell transformation. The sequence is that of V-set domain-containing T-cell activation inhibitor 1 from Homo sapiens (Human).